We begin with the raw amino-acid sequence, 209 residues long: Amelotin (209 aa).

The N-terminal stretch at 1–16 (MRSTILLFCLLGSTRS) is a signal peptide. Positions 142–209 (AGANPDVQDG…ATTESANGIQ (68 aa)) are disordered.

Belongs to the amelotin family. In terms of processing, phosphorylated by FAM20C in vitro. O-glycosylated.

The protein resides in the secreted. In terms of biological role, is a promoter of calcium phosphate mineralization, playing a critical role in the formation of the compact, mineralized, aprismatic enamel surface layer during the maturation stage of amelogenesis. In Homo sapiens (Human), this protein is Amelotin (AMTN).